The primary structure comprises 310 residues: tRNA uridine(34) hydroxylase (310 aa).

The 95-residue stretch at 124–218 (SDPEVLLIDT…YFEEVPQEES (95 aa)) folds into the Rhodanese domain. Cys-178 serves as the catalytic Cysteine persulfide intermediate.

Belongs to the TrhO family.

The catalysed reaction is uridine(34) in tRNA + AH2 + O2 = 5-hydroxyuridine(34) in tRNA + A + H2O. Its function is as follows. Catalyzes oxygen-dependent 5-hydroxyuridine (ho5U) modification at position 34 in tRNAs. This Pseudomonas putida (strain GB-1) protein is tRNA uridine(34) hydroxylase.